The sequence spans 508 residues: 25-hydroxyvitamin D-1 alpha hydroxylase, mitochondrial (508 aa).

Residue C455 participates in heme binding.

This sequence belongs to the cytochrome P450 family. The cofactor is heme. In terms of tissue distribution, kidney.

The protein resides in the mitochondrion membrane. It catalyses the reaction calcidiol + 2 reduced [adrenodoxin] + O2 + 2 H(+) = calcitriol + 2 oxidized [adrenodoxin] + H2O. It carries out the reaction secalciferol + 2 reduced [adrenodoxin] + O2 + 2 H(+) = calcitetrol + 2 oxidized [adrenodoxin] + H2O. The catalysed reaction is 25-hydroxy-24-oxocalciol + 2 reduced [adrenodoxin] + O2 + 2 H(+) = (1S)-1,25-dihydroxy-24-oxocalciol + 2 oxidized [adrenodoxin] + H2O. The enzyme catalyses 25-hydroxyvitamin D2 + 2 reduced [adrenodoxin] + O2 + 2 H(+) = 1alpha,25-dihydroxyvitamin D2 + 2 oxidized [adrenodoxin] + H2O. It participates in hormone biosynthesis; vitamin D biosynthesis. With respect to regulation, activated by cardiolipin and dioleoyl phosphatidylethanolamine (DOPE), phospholipids found in the inner mitochondrial membrane. Inhibited by high substrate concentration. Its function is as follows. A cytochrome P450 monooxygenase involved in vitamin D metabolism and in calcium and phosphorus homeostasis. Catalyzes the rate-limiting step in the activation of vitamin D in the kidney, namely the hydroxylation of 25-hydroxyvitamin D3/calcidiol at the C1alpha-position to form the hormonally active form of vitamin D3, 1alpha,25-dihydroxyvitamin D3/calcitriol that acts via the vitamin D receptor (VDR). Has 1alpha-hydroxylase activity on vitamin D intermediates of the CYP24A1-mediated inactivation pathway. Converts 24R,25-dihydroxyvitamin D3/secalciferol to 1-alpha,24,25-trihydroxyvitamin D3, an active ligand of VDR. Also active on 25-hydroxyvitamin D2. Mechanistically, uses molecular oxygen inserting one oxygen atom into a substrate, and reducing the second into a water molecule, with two electrons provided by NADPH via FDXR/adrenodoxin reductase and FDX1/adrenodoxin. The polypeptide is 25-hydroxyvitamin D-1 alpha hydroxylase, mitochondrial (CYP27B1) (Homo sapiens (Human)).